A 160-amino-acid polypeptide reads, in one-letter code: Aspartate carbamoyltransferase regulatory chain (160 aa).

Positions 110, 115, 140, and 143 each coordinate Zn(2+).

Belongs to the PyrI family. As to quaternary structure, contains catalytic and regulatory chains. Requires Zn(2+) as cofactor.

In terms of biological role, involved in allosteric regulation of aspartate carbamoyltransferase. The sequence is that of Aspartate carbamoyltransferase regulatory chain from Hyperthermus butylicus (strain DSM 5456 / JCM 9403 / PLM1-5).